Reading from the N-terminus, the 277-residue chain is Small ribosomal subunit protein uS2 (277 aa).

Residues 255–277 (AVATTDEASAPSAAATETTTEEG) form a disordered region. A compositionally biased stretch (low complexity) spans 257–277 (ATTDEASAPSAAATETTTEEG).

The protein belongs to the universal ribosomal protein uS2 family.

The protein is Small ribosomal subunit protein uS2 of Mycobacteroides abscessus (strain ATCC 19977 / DSM 44196 / CCUG 20993 / CIP 104536 / JCM 13569 / NCTC 13031 / TMC 1543 / L948) (Mycobacterium abscessus).